Reading from the N-terminus, the 328-residue chain is Ankyrin repeat domain-containing protein 2 (328 aa).

Ser-36 is subject to Phosphoserine. Ser-68 carries the phosphoserine; by PKB/AKT2 modification. The disordered stretch occupies residues 96–116 (RDALAAAQEPPPEPEEITGPV). ANK repeat units follow at residues 116–145 (VNEE…SADT), 149–178 (FRRT…TVDF), 182–211 (LDCT…DTNV), 215–244 (LLST…DINA), and 248–277 (EGDS…DMMA). Residues 297–328 (RHALEHPEPESEQNGLERPGSGRETPQPIPAQ) are disordered.

In terms of assembly, interacts with ID3; both proteins cooperate in myoblast differentiation. Interacts with TTN/titin. Interacts (via ANK repeats) with TCAP; the interaction is direct. Interacts with TJP1 (via PDZ domains). Interacts with PML; the interaction is direct. Interacts with p53/TP53. Interacts with YBX1. Interacts with AKT2. Phosphorylation at Ser-68 by PKB/AKT2 in response to oxidative stress induces translocation to the nucleus and negatively regulates myoblast differentiation. In terms of tissue distribution, expressed by myoblasts (at protein level). Expressed in skeletal and cardiac muscles.

It is found in the cytoplasm. The protein localises to the myofibril. Its subcellular location is the sarcomere. It localises to the i band. The protein resides in the cytosol. It is found in the nucleus. The protein localises to the PML body. Functionally, functions as a negative regulator of myocyte differentiation. May interact with both sarcoplasmic structural proteins and nuclear proteins to regulate gene expression during muscle development and in response to muscle stress. This is Ankyrin repeat domain-containing protein 2 (Ankrd2) from Mus musculus (Mouse).